A 476-amino-acid polypeptide reads, in one-letter code: Bifunctional protein HldE (476 aa).

The segment at 1–319 is ribokinase; that stretch reads MKISLPAFEK…AALNLSHGES (319 aa). 195–198 contributes to the ATP binding site; the sequence is NMSE. The active site involves D264. Positions 345–476 are cytidylyltransferase; that stretch reads MTNGCFDILH…AIIENIMAKQ (132 aa).

This sequence in the N-terminal section; belongs to the carbohydrate kinase PfkB family. The protein in the C-terminal section; belongs to the cytidylyltransferase family. Homodimer.

The enzyme catalyses D-glycero-beta-D-manno-heptose 7-phosphate + ATP = D-glycero-beta-D-manno-heptose 1,7-bisphosphate + ADP + H(+). The catalysed reaction is D-glycero-beta-D-manno-heptose 1-phosphate + ATP + H(+) = ADP-D-glycero-beta-D-manno-heptose + diphosphate. It participates in nucleotide-sugar biosynthesis; ADP-L-glycero-beta-D-manno-heptose biosynthesis; ADP-L-glycero-beta-D-manno-heptose from D-glycero-beta-D-manno-heptose 7-phosphate: step 1/4. The protein operates within nucleotide-sugar biosynthesis; ADP-L-glycero-beta-D-manno-heptose biosynthesis; ADP-L-glycero-beta-D-manno-heptose from D-glycero-beta-D-manno-heptose 7-phosphate: step 3/4. Its function is as follows. Catalyzes the phosphorylation of D-glycero-D-manno-heptose 7-phosphate at the C-1 position to selectively form D-glycero-beta-D-manno-heptose-1,7-bisphosphate. In terms of biological role, catalyzes the ADP transfer from ATP to D-glycero-beta-D-manno-heptose 1-phosphate, yielding ADP-D-glycero-beta-D-manno-heptose. The chain is Bifunctional protein HldE from Shewanella loihica (strain ATCC BAA-1088 / PV-4).